We begin with the raw amino-acid sequence, 225 residues long: Imidazoleglycerol-phosphate dehydratase (225 aa).

This sequence belongs to the imidazoleglycerol-phosphate dehydratase family.

It carries out the reaction D-erythro-1-(imidazol-4-yl)glycerol 3-phosphate = 3-(imidazol-4-yl)-2-oxopropyl phosphate + H2O. It functions in the pathway amino-acid biosynthesis; L-histidine biosynthesis; L-histidine from 5-phospho-alpha-D-ribose 1-diphosphate: step 6/9. This chain is Imidazoleglycerol-phosphate dehydratase (PTH3), found in Pyricularia oryzae (strain 70-15 / ATCC MYA-4617 / FGSC 8958) (Rice blast fungus).